Consider the following 688-residue polypeptide: Potassium-transporting ATPase ATP-binding subunit (688 aa).

4 helical membrane passes run 37 to 57 (FLVYISSILTTVLYAVSLVGI), 65 to 85 (ILGITIILWITVLFANFAEAI), 219 to 239 (IALQILLISLTIIFLLVTVSL), and 262 to 282 (VALLVCLAPTTIGALLSSIGI). Residue D313 is the 4-aspartylphosphate intermediate of the active site. ATP contacts are provided by residues D350, E354, 383-390 (FTAKTRMS), and K401. 2 residues coordinate Mg(2+): D524 and D528. The next 3 helical transmembrane spans lie at 594–614 (FAIIPALFIGLYPGLSALNIM), 622–642 (AIFSAIIYNALIIVALIPLAL), and 668–688 (IIVPFIAIKVIDVLITAIGIV).

The protein belongs to the cation transport ATPase (P-type) (TC 3.A.3) family. Type IA subfamily. As to quaternary structure, the system is composed of three essential subunits: KdpA, KdpB and KdpC.

It localises to the cell membrane. The enzyme catalyses K(+)(out) + ATP + H2O = K(+)(in) + ADP + phosphate + H(+). Functionally, part of the high-affinity ATP-driven potassium transport (or Kdp) system, which catalyzes the hydrolysis of ATP coupled with the electrogenic transport of potassium into the cytoplasm. This subunit is responsible for energy coupling to the transport system and for the release of the potassium ions to the cytoplasm. The sequence is that of Potassium-transporting ATPase ATP-binding subunit from Clostridium botulinum (strain Eklund 17B / Type B).